Reading from the N-terminus, the 962-residue chain is Phenylalanine--tRNA ligase beta subunit (962 aa).

One can recognise a tRNA-binding domain in the interval 85 to 201 (TIRWCKVRVC…AEVFQGDELS (117 aa)). The B5 domain occupies 456-538 (TQQSPILLST…RVIGFNRIPS (83 aa)). Residues aspartate 516, aspartate 522, glutamate 525, and glutamate 526 each contribute to the Mg(2+) site. The tract at residues 621 to 675 (PDSTHNPDSGSDPIIPTGVTRITEPGSSGVSGPGNVGVKEKCSADTSIEHAPTTR) is insert. The FDX-ACB domain occupies 870 to 961 (PTSPAATQHL…ASSKFGAIMR (92 aa)).

It belongs to the phenylalanyl-tRNA synthetase beta subunit family. Type 1 subfamily. Tetramer of two alpha and two beta subunits. The cofactor is Mg(2+).

Its subcellular location is the cytoplasm. The enzyme catalyses tRNA(Phe) + L-phenylalanine + ATP = L-phenylalanyl-tRNA(Phe) + AMP + diphosphate + H(+). This chain is Phenylalanine--tRNA ligase beta subunit, found in Tropheryma whipplei (strain Twist) (Whipple's bacillus).